Consider the following 344-residue polypeptide: Uroporphyrinogen decarboxylase (344 aa).

Residues 27 to 31 (RQAGR), Phe46, Asp77, Tyr153, Thr208, and His324 contribute to the substrate site.

It belongs to the uroporphyrinogen decarboxylase family. Homodimer.

The protein localises to the cytoplasm. It catalyses the reaction uroporphyrinogen III + 4 H(+) = coproporphyrinogen III + 4 CO2. Its pathway is porphyrin-containing compound metabolism; protoporphyrin-IX biosynthesis; coproporphyrinogen-III from 5-aminolevulinate: step 4/4. In terms of biological role, catalyzes the decarboxylation of four acetate groups of uroporphyrinogen-III to yield coproporphyrinogen-III. The chain is Uroporphyrinogen decarboxylase from Bradyrhizobium diazoefficiens (strain JCM 10833 / BCRC 13528 / IAM 13628 / NBRC 14792 / USDA 110).